Here is a 138-residue protein sequence, read N- to C-terminus: Large ribosomal subunit protein uL16 (138 aa).

It belongs to the universal ribosomal protein uL16 family. Part of the 50S ribosomal subunit.

Its function is as follows. Binds 23S rRNA and is also seen to make contacts with the A and possibly P site tRNAs. The chain is Large ribosomal subunit protein uL16 from Gluconobacter oxydans (strain 621H) (Gluconobacter suboxydans).